A 567-amino-acid chain; its full sequence is Potassium-transporting ATPase potassium-binding subunit (567 aa).

Transmembrane regions (helical) follow at residues 5–25, 64–84, 136–156, 179–199, 254–274, 285–305, 332–352, 359–376, 421–441, 486–506, and 529–549; these read GWIQ…PLGG, TTYA…LYML, GLTV…IALI, LYVL…LGVP, ISNM…TNVF, WAIF…CYWA, IAMS…AVIA, ALGG…EIII, MLAV…ASVI, ITIG…AMAI, and LFVG…FFPA.

This sequence belongs to the KdpA family. The system is composed of three essential subunits: KdpA, KdpB and KdpC.

The protein resides in the cell inner membrane. Its function is as follows. Part of the high-affinity ATP-driven potassium transport (or Kdp) system, which catalyzes the hydrolysis of ATP coupled with the electrogenic transport of potassium into the cytoplasm. This subunit binds the periplasmic potassium ions and delivers the ions to the membrane domain of KdpB through an intramembrane tunnel. This chain is Potassium-transporting ATPase potassium-binding subunit, found in Brucella anthropi (strain ATCC 49188 / DSM 6882 / CCUG 24695 / JCM 21032 / LMG 3331 / NBRC 15819 / NCTC 12168 / Alc 37) (Ochrobactrum anthropi).